The following is a 252-amino-acid chain: Auxin-induced in root cultures protein 12 (252 aa).

An N-terminal signal peptide occupies residues 1–25 (MASSSSSLLILAVACFVSLISPAIS). The DOMON domain maps to 49–165 (LNSYLHYTYN…DSVNQVWQIG (117 aa)). Residues N58 and N61 are each glycosylated (N-linked (GlcNAc...) asparagine). Heme is bound at residue M91. N-linked (GlcNAc...) asparagine glycosylation is found at N114 and N167. Position 176 (H176) interacts with heme. The interval 193–224 (EDAAPGSAPSPGSAPAPGTSGSTTPGTAAGGP) is disordered. A compositionally biased stretch (low complexity) spans 195 to 219 (AAPGSAPSPGSAPAPGTSGSTTPGT). The GPI-anchor amidated asparagine moiety is linked to residue N226. A propeptide spans 227–252 (AGSLTRNVNFGVNLGILVLLGSIFIF) (removed in mature form).

The cofactor is heme.

Its subcellular location is the cell membrane. Its function is as follows. One-heme-containing cytochrome. The polypeptide is Auxin-induced in root cultures protein 12 (AIR12) (Arabidopsis thaliana (Mouse-ear cress)).